A 317-amino-acid polypeptide reads, in one-letter code: Ribosomal protein L11 methyltransferase (317 aa).

Residues Thr169, Gly190, Asp211, and Asn256 each contribute to the S-adenosyl-L-methionine site.

Belongs to the methyltransferase superfamily. PrmA family.

It localises to the cytoplasm. It carries out the reaction L-lysyl-[protein] + 3 S-adenosyl-L-methionine = N(6),N(6),N(6)-trimethyl-L-lysyl-[protein] + 3 S-adenosyl-L-homocysteine + 3 H(+). Methylates ribosomal protein L11. This is Ribosomal protein L11 methyltransferase from Helicobacter hepaticus (strain ATCC 51449 / 3B1).